An 827-amino-acid chain; its full sequence is Lon protease 2 (827 aa).

A disordered region spans residues 1–22; sequence MSDEKKKGSAASAMPTAMAPPG. Positions 9-21 are enriched in low complexity; it reads SAASAMPTAMAPP. The Lon N-terminal domain maps to 33-227; sequence LPILPLRNSV…LVLELLNRKR (195 aa). Residue 379–386 participates in ATP binding; sequence GPPGVGKT. The Lon proteolytic domain occupies 615–796; that stretch reads TEVPGVATGL…DDVLKAALET (182 aa). Residues S702 and K745 contribute to the active site. Residues 799 to 827 form a disordered region; it reads VGVAGTPGGEPGKEAPLPKPAESAPEVRA.

It belongs to the peptidase S16 family. Homohexamer. Organized in a ring with a central cavity.

It localises to the cytoplasm. The enzyme catalyses Hydrolysis of proteins in presence of ATP.. Its function is as follows. ATP-dependent serine protease that mediates the selective degradation of mutant and abnormal proteins as well as certain short-lived regulatory proteins. Required for cellular homeostasis and for survival from DNA damage and developmental changes induced by stress. Degrades polypeptides processively to yield small peptide fragments that are 5 to 10 amino acids long. Binds to DNA in a double-stranded, site-specific manner. This Myxococcus xanthus protein is Lon protease 2.